The following is a 242-amino-acid chain: DNA repair protein RecO (242 aa).

Belongs to the RecO family. As to quaternary structure, monomer.

In terms of biological role, involved in DNA repair and RecF pathway recombination. This Salmonella agona (strain SL483) protein is DNA repair protein RecO.